A 309-amino-acid chain; its full sequence is Wnt inhibitor of Dorsal protein (309 aa).

Positions 1–16 (MIFAITFFMGITSTLA) are cleaved as a signal peptide. Intrachain disulfides connect Cys51–Cys62, Cys102–Cys110, Cys112–Cys121, Cys162–Cys179, Cys164–Cys174, Cys232–Cys269, Cys248–Cys262, Cys266–Cys308, Cys284–Cys299, and Cys286–Cys296.

Belongs to the Wnt family.

Its subcellular location is the secreted. The protein localises to the extracellular space. The protein resides in the extracellular matrix. Functionally, binds as a ligand to a family of frizzled seven-transmembrane receptors and acts through a cascade of genes on the nucleus. The sequence is that of Wnt inhibitor of Dorsal protein (wntD) from Drosophila melanogaster (Fruit fly).